The sequence spans 223 residues: MKFAVLVFPGSNCDRDMYNAAIKSGVDAAYVDYRETTLDGFDGVLIPGGFSFGDYLRSGAMASVAPIIKEVKRFAKEGKPVLGVCNGFQILTEIGLLPGALLHNDSHLFISRNETLKITNNQTPFTHLYVKNENVVYPVAHGEGHYYCTDEIYRELNDNNQIILKYTNNPNGSYEDIAGIVNKEGNVCGMMPHPERALETLLGTNSGVKLFESMVKSWREQNV.

A Glutamine amidotransferase type-1 domain is found at 3–223 (FAVLVFPGSN…MVKSWREQNV (221 aa)). Cysteine 85 acts as the Nucleophile in catalysis. Catalysis depends on residues histidine 193 and glutamate 195.

Part of the FGAM synthase complex composed of 1 PurL, 1 PurQ and 2 PurS subunits.

The protein localises to the cytoplasm. It carries out the reaction N(2)-formyl-N(1)-(5-phospho-beta-D-ribosyl)glycinamide + L-glutamine + ATP + H2O = 2-formamido-N(1)-(5-O-phospho-beta-D-ribosyl)acetamidine + L-glutamate + ADP + phosphate + H(+). The catalysed reaction is L-glutamine + H2O = L-glutamate + NH4(+). It participates in purine metabolism; IMP biosynthesis via de novo pathway; 5-amino-1-(5-phospho-D-ribosyl)imidazole from N(2)-formyl-N(1)-(5-phospho-D-ribosyl)glycinamide: step 1/2. Functionally, part of the phosphoribosylformylglycinamidine synthase complex involved in the purines biosynthetic pathway. Catalyzes the ATP-dependent conversion of formylglycinamide ribonucleotide (FGAR) and glutamine to yield formylglycinamidine ribonucleotide (FGAM) and glutamate. The FGAM synthase complex is composed of three subunits. PurQ produces an ammonia molecule by converting glutamine to glutamate. PurL transfers the ammonia molecule to FGAR to form FGAM in an ATP-dependent manner. PurS interacts with PurQ and PurL and is thought to assist in the transfer of the ammonia molecule from PurQ to PurL. The protein is Phosphoribosylformylglycinamidine synthase subunit PurQ of Staphylococcus epidermidis (strain ATCC 35984 / DSM 28319 / BCRC 17069 / CCUG 31568 / BM 3577 / RP62A).